The primary structure comprises 170 residues: Urease accessory protein UreE (170 aa).

Positions 134 to 170 (ESGAYGGGHHHHGDDGHHPLAPIPLRQKIHRPSDKAE) are disordered.

This sequence belongs to the UreE family.

It is found in the cytoplasm. Functionally, involved in urease metallocenter assembly. Binds nickel. Probably functions as a nickel donor during metallocenter assembly. This Janthinobacterium sp. (strain Marseille) (Minibacterium massiliensis) protein is Urease accessory protein UreE.